The chain runs to 172 residues: Trypsin inhibitor DE-3 (172 aa).

2 disulfide bridges follow: Cys-39–Cys-83 and Cys-132–Cys-139.

The protein belongs to the protease inhibitor I3 (leguminous Kunitz-type inhibitor) family.

Inhibition of trypsin. In Erythrina variegata (Indian coral tree), this protein is Trypsin inhibitor DE-3.